A 430-amino-acid polypeptide reads, in one-letter code: UPF0597 protein BDI_1130 (430 aa).

It belongs to the UPF0597 family.

This Parabacteroides distasonis (strain ATCC 8503 / DSM 20701 / CIP 104284 / JCM 5825 / NCTC 11152) protein is UPF0597 protein BDI_1130.